The sequence spans 124 residues: Small ribosomal subunit protein uS12 (124 aa).

At Asp89 the chain carries 3-methylthioaspartic acid.

The protein belongs to the universal ribosomal protein uS12 family. Part of the 30S ribosomal subunit. Contacts proteins S8 and S17. May interact with IF1 in the 30S initiation complex.

Its function is as follows. With S4 and S5 plays an important role in translational accuracy. In terms of biological role, interacts with and stabilizes bases of the 16S rRNA that are involved in tRNA selection in the A site and with the mRNA backbone. Located at the interface of the 30S and 50S subunits, it traverses the body of the 30S subunit contacting proteins on the other side and probably holding the rRNA structure together. The combined cluster of proteins S8, S12 and S17 appears to hold together the shoulder and platform of the 30S subunit. The chain is Small ribosomal subunit protein uS12 from Shewanella oneidensis (strain ATCC 700550 / JCM 31522 / CIP 106686 / LMG 19005 / NCIMB 14063 / MR-1).